The primary structure comprises 396 residues: S-adenosylmethionine synthase 1 (396 aa).

Residue Glu-13 participates in Mg(2+) binding. His-19 contributes to the ATP binding site. Residue Glu-47 coordinates K(+). 2 residues coordinate L-methionine: Glu-60 and Gln-103. ATP is bound by residues 171-173 (DGK), 239-242 (SGRF), Asp-250, 256-257 (RK), Ala-273, Lys-277, and Lys-281. Asp-250 is a binding site for L-methionine. Lys-281 contributes to the L-methionine binding site.

The protein belongs to the AdoMet synthase family. Homotetramer. Requires Mn(2+) as cofactor. Mg(2+) serves as cofactor. It depends on Co(2+) as a cofactor. The cofactor is K(+).

It localises to the cytoplasm. The catalysed reaction is L-methionine + ATP + H2O = S-adenosyl-L-methionine + phosphate + diphosphate. It functions in the pathway amino-acid biosynthesis; S-adenosyl-L-methionine biosynthesis; S-adenosyl-L-methionine from L-methionine: step 1/1. Catalyzes the formation of S-adenosylmethionine from methionine and ATP. The reaction comprises two steps that are both catalyzed by the same enzyme: formation of S-adenosylmethionine (AdoMet) and triphosphate, and subsequent hydrolysis of the triphosphate. May be involved in the synthesis of betain in response to abiotic stress such as high salinity. In Beta vulgaris (Sugar beet), this protein is S-adenosylmethionine synthase 1 (SAMS1).